A 281-amino-acid chain; its full sequence is Pantothenate synthetase (281 aa).

Met29 to His36 serves as a coordination point for ATP. His36 serves as the catalytic Proton donor. Gln60 contacts (R)-pantoate. Position 60 (Gln60) interacts with beta-alanine. Gly146–Asp149 contributes to the ATP binding site. Gln152 is a (R)-pantoate binding site. Residues Val175 and Met183–Arg186 contribute to the ATP site.

It belongs to the pantothenate synthetase family. In terms of assembly, homodimer.

Its subcellular location is the cytoplasm. It catalyses the reaction (R)-pantoate + beta-alanine + ATP = (R)-pantothenate + AMP + diphosphate + H(+). It functions in the pathway cofactor biosynthesis; (R)-pantothenate biosynthesis; (R)-pantothenate from (R)-pantoate and beta-alanine: step 1/1. In terms of biological role, catalyzes the condensation of pantoate with beta-alanine in an ATP-dependent reaction via a pantoyl-adenylate intermediate. In Pseudothermotoga lettingae (strain ATCC BAA-301 / DSM 14385 / NBRC 107922 / TMO) (Thermotoga lettingae), this protein is Pantothenate synthetase.